The chain runs to 356 residues: TPR repeat-containing protein P27G11.02 (356 aa).

A mitochondrion-targeting transit peptide spans 1-20 (MRMQWIWKSRRSLQNVFIRR). 2 TPR repeats span residues 194–227 (SRLF…TMAN) and 290–323 (AAAF…RKDD).

The protein resides in the mitochondrion. The sequence is that of TPR repeat-containing protein P27G11.02 from Schizosaccharomyces pombe (strain 972 / ATCC 24843) (Fission yeast).